The chain runs to 271 residues: Phosphonoacetaldehyde hydrolase (271 aa).

Residue D12 is the Nucleophile of the active site. Residues D12 and A14 each contribute to the Mg(2+) site. The active-site Schiff-base intermediate with substrate is K54. Residue D188 coordinates Mg(2+).

This sequence belongs to the HAD-like hydrolase superfamily. PhnX family. In terms of assembly, homodimer. Requires Mg(2+) as cofactor.

The enzyme catalyses phosphonoacetaldehyde + H2O = acetaldehyde + phosphate + H(+). Functionally, involved in phosphonate degradation. This chain is Phosphonoacetaldehyde hydrolase, found in Aliivibrio salmonicida (strain LFI1238) (Vibrio salmonicida (strain LFI1238)).